Reading from the N-terminus, the 860-residue chain is Leucine--tRNA ligase (860 aa).

The short motif at 42–52 is the 'HIGH' region element; it reads PYPSGRLHMGH. Residues 619–623 carry the 'KMSKS' region motif; the sequence is KMSKS. Residue K622 coordinates ATP.

It belongs to the class-I aminoacyl-tRNA synthetase family.

The protein resides in the cytoplasm. It carries out the reaction tRNA(Leu) + L-leucine + ATP = L-leucyl-tRNA(Leu) + AMP + diphosphate. This Photorhabdus laumondii subsp. laumondii (strain DSM 15139 / CIP 105565 / TT01) (Photorhabdus luminescens subsp. laumondii) protein is Leucine--tRNA ligase.